A 206-amino-acid polypeptide reads, in one-letter code: Probable chemoreceptor glutamine deamidase CheD 1 (206 aa).

Belongs to the CheD family.

It catalyses the reaction L-glutaminyl-[protein] + H2O = L-glutamyl-[protein] + NH4(+). In terms of biological role, probably deamidates glutamine residues to glutamate on methyl-accepting chemotaxis receptors (MCPs), playing an important role in chemotaxis. This is Probable chemoreceptor glutamine deamidase CheD 1 from Shewanella oneidensis (strain ATCC 700550 / JCM 31522 / CIP 106686 / LMG 19005 / NCIMB 14063 / MR-1).